An 81-amino-acid polypeptide reads, in one-letter code: Small ribosomal subunit protein bS20 (81 aa).

Belongs to the bacterial ribosomal protein bS20 family.

In terms of biological role, binds directly to 16S ribosomal RNA. In Mycoplasma capricolum subsp. capricolum (strain California kid / ATCC 27343 / NCTC 10154), this protein is Small ribosomal subunit protein bS20.